The sequence spans 143 residues: Ribonuclease VapC33 (143 aa).

Mg(2+) is bound by residues aspartate 5 and aspartate 108.

The protein belongs to the PINc/VapC protein family. Mg(2+) is required as a cofactor.

Its function is as follows. Toxic component of a type II toxin-antitoxin (TA) system. An RNase. Its toxic effect is neutralized by coexpression with cognate antitoxin VapB33. This is Ribonuclease VapC33 from Mycobacterium tuberculosis (strain CDC 1551 / Oshkosh).